The chain runs to 132 residues: Small ribosomal subunit protein uS8 (132 aa).

Belongs to the universal ribosomal protein uS8 family. In terms of assembly, part of the 30S ribosomal subunit. Contacts proteins S5 and S12.

Functionally, one of the primary rRNA binding proteins, it binds directly to 16S rRNA central domain where it helps coordinate assembly of the platform of the 30S subunit. The protein is Small ribosomal subunit protein uS8 of Clostridioides difficile (strain 630) (Peptoclostridium difficile).